Consider the following 457-residue polypeptide: Multidrug resistance protein MdtK (457 aa).

The next 12 helical transmembrane spans lie at Leu11–Val31, Ile53–Ala73, Trp93–Ile113, Ala127–Ala147, Gly160–Tyr180, Gly189–Val209, Leu243–Val263, Ile276–Thr296, Ala314–Val334, Val350–Ile370, Ile387–Ala407, and Pro418–Leu438.

This sequence belongs to the multi antimicrobial extrusion (MATE) (TC 2.A.66.1) family. MdtK subfamily.

The protein resides in the cell inner membrane. Its function is as follows. Multidrug efflux pump that functions probably as a Na(+)/drug antiporter. This Escherichia coli O139:H28 (strain E24377A / ETEC) protein is Multidrug resistance protein MdtK.